The primary structure comprises 316 residues: Polyprenyl transferase dpchC (316 aa).

Helical transmembrane passes span 24–44, 60–80, 105–125, 154–174, 192–212, 234–254, 258–278, and 296–316; these read PLFT…AKMA, ALCF…NDWI, EAMV…EVML, MLGI…AVIG, CLPL…AYSY, IHLL…IYLF, SLWL…QQLV, and FILG…TGSA.

It belongs to the UbiA prenyltransferase family. It depends on Mg(2+) as a cofactor.

It localises to the membrane. Its pathway is secondary metabolite biosynthesis; terpenoid biosynthesis. Functionally, polyprenyl transferase; part of the gene cluster that mediates the biosynthesis of the diterpenoid pyrones higginsianins A and B. The first step of the pathway is the synthesis of the alpha-pyrone moiety by the polyketide synthase dpchA via condensation of one acetyl-CoA starter unit with 3 malonyl-CoA units and 2 methylations. The alpha-pyrone is then combined with geranylgeranyl pyrophosphate (GGPP) formed by the GGPP synthase dpchD through the action of the prenyltransferase dpchC to yield a linear alpha-pyrone diterpenoid. Subsequent steps in the diterpenoid pyrone biosynthetic pathway involve the decalin core formation, which is initiated by the epoxidation of the C10-C11 olefin by the FAD-dependent oxidoreductase dpchE, and is followed by a cyclization cascade catalyzed by the terpene cyclase dpchB. The short chain dehydrogenase/reductase dpchG then oxidizes the 8S hydroxy group to a ketone and the short chain dehydrogenase/reductase dpchH reduces the ketone to the 8R hydroxy group to yield higginsianin B. Finally, the FAD-dependent oxidoreductase dpchF converts higginsianin B into higginsianin A. This is Polyprenyl transferase dpchC from Colletotrichum higginsianum (strain IMI 349063) (Crucifer anthracnose fungus).